We begin with the raw amino-acid sequence, 379 residues long: Leukocyte elastase inhibitor A (379 aa).

Serine 300 is modified (phosphoserine). Positions 351-379 are CARD-binding motif (CBM); it reads EFTVDHPFIFFIRHNPTSNVLFLGRVCSP.

It belongs to the serpin family. Ov-serpin subfamily. Monomer. Interacts (via C-terminus) with CASP1 and CASP4 (via CARD domain); these interactions regulate the activity of inflammatory caspases. In terms of tissue distribution, ubiquitous with higher expression in pancreas, spleen and bone marrow.

Its subcellular location is the secreted. It localises to the cytoplasm. The protein localises to the cytolytic granule. It is found in the early endosome. Functionally, neutrophil serine protease inhibitor that plays an essential role in the regulation of the innate immune response, inflammation and cellular homeostasis. Acts primarily to protect the cell from proteases released in the cytoplasm during stress or infection. These proteases are important in killing microbes but when released from granules, these potent enzymes also destroy host proteins and contribute to mortality. Regulates the activity of the neutrophil proteases elastase, cathepsin G, proteinase-3, chymase, chymotrypsin, and kallikrein-3. Also acts as a potent intracellular inhibitor of granzyme H. During inflammation, limits the activity of inflammatory caspases CASP1 and CASP4 by suppressing their caspase-recruitment domain (CARD) oligomerization and enzymatic activation. In addition, promotes the proliferation of beta-cells when secreted. This chain is Leukocyte elastase inhibitor A (Serpinb1a), found in Mus musculus (Mouse).